Consider the following 920-residue polypeptide: Nitrate reductase [NADH] (920 aa).

The interval 1–69 (MAASVENRQF…DTSDDEEDEA (69 aa)) is disordered. Positions 60–69 (DTSDDEEDEA) are enriched in acidic residues. A Mo-molybdopterin-binding site is contributed by cysteine 185. The region spanning 534–609 (SLTFTMSEVK…LEEYRVGELI (76 aa)) is the Cytochrome b5 heme-binding domain. Positions 569 and 592 each coordinate heme. Positions 663 to 775 (REKIPCKLIS…KGPLGHIEYM (113 aa)) constitute an FAD-binding FR-type domain. Residues 715–718 (RAYT), 732–736 (LVKIY), phenylalanine 737, phenylalanine 744, 749–751 (LMS), and threonine 802 contribute to the FAD site.

Belongs to the nitrate reductase family. In terms of assembly, homodimer. FAD serves as cofactor. The cofactor is heme. Mo-molybdopterin is required as a cofactor. As to expression, in cortical cells of roots grown at low nitrate concentrations, in vascular tissues of roots at high nitrate concentrations and in root apex under both conditions.

The enzyme catalyses nitrite + NAD(+) + H2O = nitrate + NADH + H(+). Functionally, nitrate reductase is a key enzyme involved in the first step of nitrate assimilation in plants, fungi and bacteria. This Cichorium intybus (Chicory) protein is Nitrate reductase [NADH] (NIA).